Here is an 818-residue protein sequence, read N- to C-terminus: IQ and AAA domain-containing protein 1-like (818 aa).

Positions 206–235 (QGQAAVTIQKVWKGYLQRKRTQQDRRMEME) constitute an IQ domain. 2 disordered regions span residues 344-377 (QMQE…AKKG) and 458-482 (EERP…KDLT). Basic residues predominate over residues 463-476 (RAPKKTPGKKTGKK). 567 to 574 (GPSGMGKK) is an ATP binding site. Residues 795 to 818 (SMKHRMDQLEAEEAKLDKEKKKRK) are disordered. Residues 798 to 818 (HRMDQLEAEEAKLDKEKKKRK) are compositionally biased toward basic and acidic residues.

It belongs to the AAA ATPase family.

The chain is IQ and AAA domain-containing protein 1-like (IQCA1L) from Homo sapiens (Human).